Here is a 476-residue protein sequence, read N- to C-terminus: E1B 55 kDa protein (476 aa).

Disordered regions lie at residues 1-20 and 42-95; these read MERP…GNGS and FGSS…KMEN. Phosphoserine occurs at positions 472 and 473.

It belongs to the adenoviridae E1B 55 kDa protein family. Interacts with host PML-4 and PML-5; this interaction promotes efficient subnuclear targeting of E1B-55K to PML nuclear bodies. Interacts with E4-ORF3 protein. Interacts with E4-ORF6 protein.

The protein resides in the host nucleus. It localises to the host cytoplasm. Plays a major role to prevent cellular inhibition of viral genome replication. Assembles an SCF-like E3 ubiquitin ligase complex based on the cellular proteins ELOB, ELOC, CUL5 and RBX1, in cooperation with viral E4orf6. This viral RING-type ligase ubiquitinates cellular substrates and targets them to proteasomal degradation: TP53/p53, LIG4, MRE11-RAD50-NBS1 (MRN) complex, ITGA3, DAXX and BLM. E1B-55K probably acts as the substrate-specific adapter of the SCF-like E3 ubiquitin ligase complex. Degradation of host TP53/p53 activity is essential for preventing E1A-induced TP53 accumulation that would otherwise lead to cell apoptosis and growth arrest. E1B-55K also inactivates TP53 transcription-factor activity by binding its transactivation domain. E1B-55K also functions as a SUMO1 E3 ligase for TP53 which causes the latter to be sequestered in promyelocytic leukemia (PML) nuclear bodies thereby contributing to maximal inhibition of TP53 function. This chain is E1B 55 kDa protein, found in Human adenovirus F serotype 40 (HAdV-40).